The chain runs to 2760 residues: A-kinase anchor protein 13 (2760 aa).

Disordered regions lie at residues 356–388 (CSHK…QDSC), 442–517 (PDAR…EPKQ), 530–577 (AAGA…VLPA), 604–711 (SSLD…AAHN), 729–857 (EKDL…EQEG), 890–940 (GGSI…QEIS), 954–1029 (EKAL…ASEA), and 1132–1162 (EGTD…DLPT). A compositionally biased stretch (polar residues) spans 378–388 (DSRSASHQDSC). The segment covering 442–454 (PDARQHSSGRELP) has biased composition (basic and acidic residues). The segment at 482 to 504 (QNSKPQVGESAKERLENSDISSA) is important for interaction with PRKAR2A. Residues 530–547 (AAGADAPAEASPAWSPEE) are compositionally biased toward low complexity. 3 stretches are compositionally biased toward polar residues: residues 620 to 638 (KQNS…SQAP), 654 to 664 (CPQSTETSSGG), and 701 to 711 (DTVTSDTAAHN). The segment covering 769–780 (SSFSLASSPESE) has biased composition (low complexity). Phosphoserine is present on Ser776. Phosphothreonine is present on Thr801. Basic and acidic residues predominate over residues 814–826 (PDGRDLNDTDKVG). Positions 839–849 (ELQTSMGNTSP) are enriched in polar residues. Positions 906–931 (GKDKATKCPSVKEDVHSSEMSREDQR) are enriched in basic and acidic residues. A Phosphothreonine modification is found at Thr932. 2 stretches are compositionally biased toward polar residues: residues 958–972 (QHSN…CLQT) and 1001–1020 (TSLS…SGSS). The residue at position 962 (Ser962) is a Phosphoserine. The tract at residues 1213–1228 (SIEETATRIVEAVIKQ) is important for interaction with PRKAR2A. Disordered regions lie at residues 1392–1411 (GVLQ…PSDE), 1425–1508 (LLCD…VPAN), and 1520–1539 (SPFR…DAEM). Positions 1428–1439 (DTTGSSSSTDDT) are enriched in low complexity. Polar residues predominate over residues 1449-1472 (GSDVSLPQTSKLNRSRNHQSSNGF). 5 positions are modified to phosphoserine: Ser1450, Ser1468, Ser1501, Ser1526, and Ser1585. The interval 1546 to 1695 (QVLGHVVRRP…SRPFHSASAN (150 aa)) is important for interaction with MAP2K3. The segment at 1592–1628 (GGGVGNKPSSSLEISSANSSELRNPFSGEEQRSSLMS) is disordered. Positions 1600–1611 (SSSLEISSANSS) are enriched in low complexity. A phosphoserine mark is found at Ser1625, Ser1628, and Ser1630. N6-methyllysine is present on Lys1654. The disordered stretch occupies residues 1733-1755 (RNKMSSSKKSKKEKDKKTLNGHT). The segment at 1753–1800 (GHTFSPIPIVGPINCSQCMKPFTNKDAYTCASCGAFVHKGCRENLASC) adopts a Phorbol-ester/DAG-type zinc-finger fold. Residues Ser1838, Ser1857, and Ser1891 each carry the phosphoserine modification. An interaction with ESR1 region spans residues 1881–2760 (MSNTWKFLSH…VPAEGEEIFC (880 aa)). Thr1892 carries the post-translational modification Phosphothreonine. Ser1894 and Ser1907 each carry phosphoserine. The region spanning 1956-2153 (KRQEVIYELM…KDVIGAVDSK (198 aa)) is the DH domain. In terms of domain architecture, PH spans 2176 to 2280 (MRMKSGQMFA…WIQIIQDTIN (105 aa)). Residues Ser2292 and Ser2345 each carry the phosphoserine modification. Positions 2292–2329 (SENEEEKRLLDTKARELKEQLQQKDQQILLLLEEKEMI) form a coiled coil. Position 2415 is a phosphothreonine (Thr2415). The segment at 2422 to 2450 (HQLNASKGGEKEEGDDGQDLRRTESDSGL) is disordered. Residues 2439–2450 (QDLRRTESDSGL) show a composition bias toward basic and acidic residues. Residues Ser2511 and Ser2514 each carry the phosphoserine modification. Residues 2516-2632 (LIEQEKQRSL…LSQRQMEQDL (117 aa)) are a coiled coil. Disordered stretches follow at residues 2568-2588 (AERE…REEL) and 2660-2760 (TPSI…EIFC). Composition is skewed to polar residues over residues 2660–2684 (TPSI…SISR) and 2696–2711 (SSAS…SQAP). At Ser2676 the chain carries Phosphoserine. The span at 2743 to 2752 (PGDGPAPEVP) shows a compositional bias: low complexity.

Interacts with the cAMP-dependent protein kinase (PKA) holoenzyme and with the regulatory subunit PRKAR2A. Interacts with RHOA. Also interacts with RHOB and RHOC. Identified in a ternary complex with RHOA and PRKAR2A. Identified in a complex with NR3C1 and RHOA. Interacts with BRAF and KSR1. Identified in a complex with BRAF and KSR1. Component of a signaling complex containing at least AKAP13, PKN1, MAPK14, ZAK and MAP2K3. Within this complex, AKAP13 interacts directly with PKN1, which in turn recruits MAPK14, MAP2K3 and ZAK. Interacts (phosphorylated form) with YWHAB and YWHAZ. Interaction with YWHAB inhibits activation of RHOA, interferes with PKN1 binding and activation of MAP kinases. Interacts with GNA12. Interacts with IKBKB. Interacts with ESR1, THRA, PPARA and NME2. Interacts (via the C-terminal domain after the PH domain) with MEF2C and RXRB. Interacts (via the C-terminal domain after the PH domain) with PRKD1. Detected in bone osteoblasts (at protein level).

It is found in the cytoplasm. The protein localises to the cytosol. Its subcellular location is the cell cortex. The protein resides in the nucleus. It localises to the membrane. Its function is as follows. Scaffold protein that plays an important role in assembling signaling complexes downstream of several types of G protein-coupled receptors. Activates RHOA in response to signaling via G protein-coupled receptors via its function as Rho guanine nucleotide exchange factor. May also activate other Rho family members. Part of a kinase signaling complex that links ADRA1A and ADRA1B adrenergic receptor signaling to the activation of downstream p38 MAP kinases, such as MAPK11 and MAPK14. Part of a signaling complex that links ADRA1B signaling to the activation of RHOA and IKBKB/IKKB, leading to increased NF-kappa-B transcriptional activity. Part of a RHOA-dependent signaling cascade that mediates responses to lysophosphatidic acid (LPA), a signaling molecule that activates G-protein coupled receptors and potentiates transcriptional activation of the glucocorticoid receptor NR3C1. Part of a signaling cascade that stimulates MEF2C-dependent gene expression in response to lysophosphatidic acid (LPA). Part of a signaling pathway that activates MAPK11 and/or MAPK14 and leads to increased transcription activation of the estrogen receptors ESR1 and ESR2. Part of a signaling cascade that links cAMP and EGFR signaling to BRAF signaling and to PKA-mediated phosphorylation of KSR1, leading to the activation of downstream MAP kinases, such as MAPK1 or MAPK3. Functions as a scaffold protein that anchors cAMP-dependent protein kinase (PKA) and PRKD1. This promotes activation of PRKD1, leading to increased phosphorylation of HDAC5 and ultimately cardiomyocyte hypertrophy. Has no guanine nucleotide exchange activity on CDC42, Ras or Rac. Required for normal embryonic heart development, and in particular for normal sarcomere formation in the developing cardiomyocytes. Plays a role in cardiomyocyte growth and cardiac hypertrophy in response to activation of the beta-adrenergic receptor by phenylephrine or isoproterenol. Required for normal adaptive cardiac hypertrophy in response to pressure overload. Plays a role in osteogenesis. The chain is A-kinase anchor protein 13 from Rattus norvegicus (Rat).